The chain runs to 551 residues: DEAD-box ATP-dependent RNA helicase 47, mitochondrial (551 aa).

A mitochondrion-targeting transit peptide spans 1–29 (MAASTSTRFLVLLKDFSAFRKISWTCAAT). The short motif at 110–138 (KSFEELGLPDSLLDSLEREGFSVPTDVQS) is the Q motif element. The Helicase ATP-binding domain occupies 141 to 340 (VPAIIKGHDA…KSWSHEPVLV (200 aa)). Position 154-161 (154-161 (SYTGSGKT)) interacts with ATP. The DEAD box signature appears at 274–277 (DEVD). The Helicase C-terminal domain maps to 397–548 (TLRRCVHALD…ELVVTEEDKA (152 aa)).

It belongs to the DEAD box helicase family. In terms of tissue distribution, mostly expressed in leaves and flowers, and, to a lower extent, in roots, seedlings and siliques, especially in meristematic regions.

The protein localises to the mitochondrion. It catalyses the reaction ATP + H2O = ADP + phosphate + H(+). In terms of biological role, essential protein required during embryogenesis. Required for mitochondrial metabolism. Necessary for normal plasmodesmata (PD) development and aperture regulation. This is DEAD-box ATP-dependent RNA helicase 47, mitochondrial (RH47) from Arabidopsis thaliana (Mouse-ear cress).